Here is a 237-residue protein sequence, read N- to C-terminus: Placenta-expressed transcript 1 protein (237 aa).

A signal peptide spans 1 to 27 (MLSLRSLLPHLGLFLCLALHLSPSLSA). N-linked (GlcNAc...) asparagine glycans are attached at residues N30, N67, N103, and N136. Positions 145 to 162 (KMEQVQPSASTPIPESSE) are enriched in polar residues. Residues 145–170 (KMEQVQPSASTPIPESSETSQTINTT) are disordered. S218 carries the GPI-anchor amidated serine lipid modification. A propeptide spans 219 to 237 (PLAGALHILLVFLISKLLF) (removed in mature form).

In terms of processing, N-glycosylated. Post-translationally, GPI-anchored. As to expression, present in hair follicle cells and sebaceous gland of skin, ciliated epithelial cells of trachea and bronchial tube, striated portion of submandibular gland, distal convoluted tubule cells of kidney, ciliated epithelial cells of oviduct, medulla of adrenal gland and anterior lobe of pituitary gland. Expressed in keratinocytes of the hair follicle at the trichilemmal zone corresponding to the terminally differentiated outermost suprabasal outer root sheath (ORS), including that of the sebaceous gland duct (SGD) and the directly adjacent upper distal end of the companion layer (CL). Expression is similar in all hair follicle growth stages. Also detected during both the early and late anagen phases above the bulge of stem cells. Expressed at the leading edge of the epidermal wound. Not expressed in the interfollicular epidermis (IFE), inner root sheath (IRS) and hair fiber. Highly expressed in placenta. Detected in mammary and prostate epithelia and in the pancreas (at protein level).

The protein localises to the apical cell membrane. Its function is as follows. Modulates leading keratinocyte migration and cellular adhesion to matrix proteins during a wound-healing response and promotes wound repair. May play a role during trichilemmal differentiation of the hair follicle. The polypeptide is Placenta-expressed transcript 1 protein (Plet1) (Mus musculus (Mouse)).